Here is a 1097-residue protein sequence, read N- to C-terminus: DNA-directed RNA polymerase subunit beta (1097 aa).

The interval 1071 to 1097 is disordered; it reads MQDVNPKRNTPSRPTYESLGTSEYAED. Over residues 1077-1091 the composition is skewed to polar residues; it reads KRNTPSRPTYESLGT.

The protein belongs to the RNA polymerase beta chain family. In terms of assembly, in cyanobacteria the RNAP catalytic core is composed of 2 alpha, 1 beta, 1 beta', 1 gamma and 1 omega subunit. When a sigma factor is associated with the core the holoenzyme is formed, which can initiate transcription.

The enzyme catalyses RNA(n) + a ribonucleoside 5'-triphosphate = RNA(n+1) + diphosphate. Its function is as follows. DNA-dependent RNA polymerase catalyzes the transcription of DNA into RNA using the four ribonucleoside triphosphates as substrates. The chain is DNA-directed RNA polymerase subunit beta from Prochlorococcus marinus subsp. pastoris (strain CCMP1986 / NIES-2087 / MED4).